The chain runs to 150 residues: Deoxyuridine 5'-triphosphate nucleotidohydrolase (150 aa).

Substrate is bound by residues 69 to 71, Asn-82, 86 to 88, and Lys-96; these read RSG and LID.

It belongs to the dUTPase family. The cofactor is Mg(2+).

It catalyses the reaction dUTP + H2O = dUMP + diphosphate + H(+). The protein operates within pyrimidine metabolism; dUMP biosynthesis; dUMP from dCTP (dUTP route): step 2/2. Functionally, this enzyme is involved in nucleotide metabolism: it produces dUMP, the immediate precursor of thymidine nucleotides and it decreases the intracellular concentration of dUTP so that uracil cannot be incorporated into DNA. This chain is Deoxyuridine 5'-triphosphate nucleotidohydrolase, found in Neisseria gonorrhoeae (strain NCCP11945).